A 156-amino-acid chain; its full sequence is Small ribosomal subunit protein uS7 (156 aa).

It belongs to the universal ribosomal protein uS7 family. In terms of assembly, part of the 30S ribosomal subunit. Contacts proteins S9 and S11.

Functionally, one of the primary rRNA binding proteins, it binds directly to 16S rRNA where it nucleates assembly of the head domain of the 30S subunit. Is located at the subunit interface close to the decoding center, probably blocks exit of the E-site tRNA. This Syntrophotalea carbinolica (strain DSM 2380 / NBRC 103641 / GraBd1) (Pelobacter carbinolicus) protein is Small ribosomal subunit protein uS7.